The following is a 131-amino-acid chain: Small ribosomal subunit protein bS6 (131 aa).

Residues 98-131 are disordered; the sequence is EASPMVKAKDERRERRDDFANETADDAEAGDSEE. Positions 104–116 are enriched in basic and acidic residues; that stretch reads KAKDERRERRDDF. Over residues 120-131 the composition is skewed to acidic residues; sequence TADDAEAGDSEE.

This sequence belongs to the bacterial ribosomal protein bS6 family.

Its function is as follows. Binds together with bS18 to 16S ribosomal RNA. This is Small ribosomal subunit protein bS6 from Cronobacter sakazakii (strain ATCC BAA-894) (Enterobacter sakazakii).